A 93-amino-acid polypeptide reads, in one-letter code: Cell division protein FtsB (93 aa).

Residues Met1–Leu3 lie on the Cytoplasmic side of the membrane. The chain crosses the membrane as a helical span at residues Phe4 to Phe21. Topologically, residues Gly22–Arg93 are periplasmic. The stretch at Asp28–Glu76 forms a coiled coil.

The protein belongs to the FtsB family. In terms of assembly, part of a complex composed of FtsB, FtsL and FtsQ.

The protein resides in the cell inner membrane. In terms of biological role, essential cell division protein. May link together the upstream cell division proteins, which are predominantly cytoplasmic, with the downstream cell division proteins, which are predominantly periplasmic. This chain is Cell division protein FtsB, found in Histophilus somni (strain 129Pt) (Haemophilus somnus).